The sequence spans 139 residues: Nuclear transcription factor Y subunit B-4 (139 aa).

The DNA-binding element occupies Leu-8 to Gly-14. The interval Val-35–Val-46 is subunit association domain (SAD). Positions Tyr-90–Thr-115 are enriched in basic and acidic residues. Positions Tyr-90–Arg-139 are disordered. The segment covering Arg-116–Lys-125 has biased composition (polar residues).

It belongs to the NFYB/HAP3 subunit family. In terms of assembly, heterotrimeric transcription factor composed of three components, NF-YA, NF-YB and NF-YC. NF-YB and NF-YC must interact and dimerize for NF-YA association and DNA binding. In terms of tissue distribution, expressed in flowers, siliques and young rosettes.

The protein resides in the nucleus. Component of the NF-Y/HAP transcription factor complex. The NF-Y complex stimulates the transcription of various genes by recognizing and binding to a CCAAT motif in promoters. This Arabidopsis thaliana (Mouse-ear cress) protein is Nuclear transcription factor Y subunit B-4 (NFYB4).